We begin with the raw amino-acid sequence, 617 residues long: Proline--tRNA ligase (617 aa).

This sequence belongs to the class-II aminoacyl-tRNA synthetase family. ProS type 1 subfamily. As to quaternary structure, homodimer.

The protein localises to the cytoplasm. The catalysed reaction is tRNA(Pro) + L-proline + ATP = L-prolyl-tRNA(Pro) + AMP + diphosphate. Catalyzes the attachment of proline to tRNA(Pro) in a two-step reaction: proline is first activated by ATP to form Pro-AMP and then transferred to the acceptor end of tRNA(Pro). As ProRS can inadvertently accommodate and process non-cognate amino acids such as alanine and cysteine, to avoid such errors it has two additional distinct editing activities against alanine. One activity is designated as 'pretransfer' editing and involves the tRNA(Pro)-independent hydrolysis of activated Ala-AMP. The other activity is designated 'posttransfer' editing and involves deacylation of mischarged Ala-tRNA(Pro). The misacylated Cys-tRNA(Pro) is not edited by ProRS. The protein is Proline--tRNA ligase of Streptococcus pneumoniae serotype 19F (strain G54).